We begin with the raw amino-acid sequence, 255 residues long: Developmental and secondary metabolism regulator MVE1 (255 aa).

A Velvet domain is found at 31-226; it reads GRKLTYRMSV…AEQGCRVRIR (196 aa). Positions 45–50 match the Nuclear localization signal motif; it reads VRARAC. Disordered stretches follow at residues 163 to 184 and 229 to 255; these read CKSPKDEDKTEEGAKSESDAHV and VRMRKRETKPGGREWDNYEDETAQARA. Acidic residues predominate over residues 245 to 255; sequence NYEDETAQARA.

The protein belongs to the velvet family. VeA subfamily. As to quaternary structure, component of the heterotrimeric velvet complex composed of LAE1, MVE1 and VEL2; MVE1 acting as a bridging protein between LAE1 and VEL2.

The protein resides in the nucleus. The protein localises to the cytoplasm. In terms of biological role, component of the velvet transcription factor complex that controls sexual/asexual developmental ratio in response to light, promoting sexual development in the darkness while stimulating asexual sporulation under illumination. The velvet complex hat acts as a global regulator for secondary metabolite gene expression. Controls the expression of the melanin gene cluster. Mediates the light-stimulated formation of aerial mycelia. This is Developmental and secondary metabolism regulator MVE1 from Zymoseptoria tritici (strain CBS 115943 / IPO323) (Speckled leaf blotch fungus).